Here is a 431-residue protein sequence, read N- to C-terminus: Enolase (431 aa).

Position 166 (Gln166) interacts with (2R)-2-phosphoglycerate. Glu208 functions as the Proton donor in the catalytic mechanism. Asp245, Glu288, and Asp315 together coordinate Mg(2+). Lys340, Arg369, Ser370, and Lys391 together coordinate (2R)-2-phosphoglycerate. Catalysis depends on Lys340, which acts as the Proton acceptor.

Belongs to the enolase family. Requires Mg(2+) as cofactor.

It localises to the cytoplasm. The protein resides in the secreted. Its subcellular location is the cell surface. It catalyses the reaction (2R)-2-phosphoglycerate = phosphoenolpyruvate + H2O. Its pathway is carbohydrate degradation; glycolysis; pyruvate from D-glyceraldehyde 3-phosphate: step 4/5. In terms of biological role, catalyzes the reversible conversion of 2-phosphoglycerate (2-PG) into phosphoenolpyruvate (PEP). It is essential for the degradation of carbohydrates via glycolysis. This chain is Enolase, found in Clostridium perfringens (strain 13 / Type A).